We begin with the raw amino-acid sequence, 271 residues long: Extent of cell elongation protein 1 (271 aa).

The first 18 residues, 1–18 (MKFSKIACATVFALSSQA), serve as a signal peptide directing secretion. A helical membrane pass occupies residues 62-82 (SIIGIIMGILGNIPQVIQIIM).

In terms of assembly, polymerizes in solution to form membrane pores. In terms of processing, cleavage by KEX2 generates 8 peptides ECE1-I to ECE1-VIII, all terminating in Lys-Arg. Only peptide ECE1-III, called candidalysin, shows toxin activity.

The protein resides in the secreted. It is found in the host cell membrane. Its function is as follows. Secreted protein cleaved by KEX2 in 8 similar peptides (ECE1-I to ECE1-VIII). Stimulates biofilm formation. Functionally, acts as a cytolytic peptide toxin that directly damages host epithelial membranes, triggers a danger response signaling pathway and activates epithelial immunity. Polymerizes in solution to form membrane pores to damage epithelial cells. Induces calcium influx, oxidative stress, mitochondrial dysfunction and ATP depletion in host cells, leading to epithelial necrosis. Serves as a danger signal that potentiates the immune response, and more specifically IL-17 response. Induces cytokine/chemokine secretion by host (especially CCL2/3/4, CXCL1 and S100A8), neutrophil recruitment, and promotes mortality in zebrafish and murine models of systemic fungal infection. Mediates distinct epithelial inflammatory responses through p38, EGFR-ERK and TREM-1/DAP12 pathways. Acts as one of the hypha-derived drivers of NLRP3 inflammasome responses in primary macrophages and thus contributes to the capacity to induce maturation and secretion of IL-1beta from primary macrophages. Stimulates mast cells by mediating cross-talk between signaling pathways activated by the dectin-1 receptor and MAPKs. Enables escape via the gasdermin-mediated pyroptosis, as well as a cell lysis pathway associated with macrophage extracellular trap formation termed ETosis. Acts as the main hemolytic factor of C.albicans. As an exotoxine, also promotes alcohol-associated liver disease or oral carcinogenesis. In Candida albicans (strain SC5314 / ATCC MYA-2876) (Yeast), this protein is Extent of cell elongation protein 1.